The following is a 572-amino-acid chain: Cuticlin-6 (572 aa).

Positions 1 to 24 (MRPIPYDISLSITSFLSLILICSA) are cleaved as a signal peptide. The Extracellular segment spans residues 25-541 (NPIDNGLVDS…PLPYPLINTN (517 aa)). Positions 47–216 (EVILLLDASG…QLDRALADSL (170 aa)) constitute a VWFA domain. N78 carries an N-linked (GlcNAc...) asparagine glycan. The ZP domain maps to 233–479 (ICGPDRIGVK…GGCEGITPPQ (247 aa)). The chain crosses the membrane as a helical span at residues 542 to 562 (LWIMGIITLTNIFVFILTVWF). The Cytoplasmic portion of the chain corresponds to 563 to 572 (TFRKRRCKPA).

The protein resides in the cell membrane. In terms of biological role, plays a role in alae formation in dauer larvae probably by regulating cuticle assembly. This chain is Cuticlin-6, found in Caenorhabditis elegans.